The chain runs to 284 residues: Thymidylate synthase (284 aa).

R34 contacts dUMP. H64 contacts (6R)-5,10-methylene-5,6,7,8-tetrahydrofolate. 139-140 contributes to the dUMP binding site; sequence RR. C159 functions as the Nucleophile in the catalytic mechanism. Residues 186 to 189, N197, and 227 to 229 contribute to the dUMP site; these read RSAD and HIY. D189 is a binding site for (6R)-5,10-methylene-5,6,7,8-tetrahydrofolate. A283 lines the (6R)-5,10-methylene-5,6,7,8-tetrahydrofolate pocket.

It belongs to the thymidylate synthase family. Bacterial-type ThyA subfamily. In terms of assembly, homodimer.

The protein localises to the cytoplasm. The catalysed reaction is dUMP + (6R)-5,10-methylene-5,6,7,8-tetrahydrofolate = 7,8-dihydrofolate + dTMP. Its pathway is pyrimidine metabolism; dTTP biosynthesis. In terms of biological role, catalyzes the reductive methylation of 2'-deoxyuridine-5'-monophosphate (dUMP) to 2'-deoxythymidine-5'-monophosphate (dTMP) while utilizing 5,10-methylenetetrahydrofolate (mTHF) as the methyl donor and reductant in the reaction, yielding dihydrofolate (DHF) as a by-product. This enzymatic reaction provides an intracellular de novo source of dTMP, an essential precursor for DNA biosynthesis. The sequence is that of Thymidylate synthase from Polaromonas sp. (strain JS666 / ATCC BAA-500).